Consider the following 210-residue polypeptide: FMN-dependent NADH:quinone oxidoreductase (210 aa).

Residues 17–19, 102–105, and 148–151 contribute to the FMN site; these read SRS, MWNL, and SCGG.

Belongs to the azoreductase type 1 family. Homodimer. Requires FMN as cofactor.

It carries out the reaction 2 a quinone + NADH + H(+) = 2 a 1,4-benzosemiquinone + NAD(+). It catalyses the reaction N,N-dimethyl-1,4-phenylenediamine + anthranilate + 2 NAD(+) = 2-(4-dimethylaminophenyl)diazenylbenzoate + 2 NADH + 2 H(+). Quinone reductase that provides resistance to thiol-specific stress caused by electrophilic quinones. Functionally, also exhibits azoreductase activity. Catalyzes the reductive cleavage of the azo bond in aromatic azo compounds to the corresponding amines. The sequence is that of FMN-dependent NADH:quinone oxidoreductase from Trichlorobacter lovleyi (strain ATCC BAA-1151 / DSM 17278 / SZ) (Geobacter lovleyi).